Consider the following 121-residue polypeptide: Large ribosomal subunit protein bL12 (121 aa).

The protein belongs to the bacterial ribosomal protein bL12 family. Homodimer. Part of the ribosomal stalk of the 50S ribosomal subunit. Forms a multimeric L10(L12)X complex, where L10 forms an elongated spine to which 2 to 4 L12 dimers bind in a sequential fashion. Binds GTP-bound translation factors.

Functionally, forms part of the ribosomal stalk which helps the ribosome interact with GTP-bound translation factors. Is thus essential for accurate translation. The polypeptide is Large ribosomal subunit protein bL12 (Clostridioides difficile (strain 630) (Peptoclostridium difficile)).